Reading from the N-terminus, the 195-residue chain is Probable GTP-binding protein EngB (195 aa).

The 172-residue stretch at 24-195 (ELPEIALAGR…EAWDAILEKL (172 aa)) folds into the EngB-type G domain. Residues 32 to 39 (GRSNVGKS), 59 to 63 (GKTQL), 77 to 80 (DVPG), 144 to 147 (TKAD), and 176 to 178 (FSS) contribute to the GTP site. Mg(2+) is bound by residues serine 39 and threonine 61.

The protein belongs to the TRAFAC class TrmE-Era-EngA-EngB-Septin-like GTPase superfamily. EngB GTPase family. Requires Mg(2+) as cofactor.

Functionally, necessary for normal cell division and for the maintenance of normal septation. This chain is Probable GTP-binding protein EngB, found in Streptococcus pneumoniae (strain JJA).